An 80-amino-acid polypeptide reads, in one-letter code: Ataxin-8 (80 aa).

As to expression, specifically found in brains from SCA8 patients (at protein level).

The protein localises to the nucleus. This Homo sapiens (Human) protein is Ataxin-8 (ATXN8).